The sequence spans 289 residues: Stress response regulator protein 1 (289 aa).

Residues 77–136 (LDCTNSEMDEEDDFEDDEDDENLGLINPLHHKSSHGQISDYSPLTPFTEPPSASLSKPSF) are disordered. Over residues 83 to 98 (EMDEEDDFEDDEDDEN) the composition is skewed to acidic residues. Residues 127 to 136 (PSASLSKPSF) are compositionally biased toward polar residues. The Response regulatory domain occupies 163–281 (NFLIVDDNII…YDFVMDRIDE (119 aa)). The residue at position 214 (aspartate 214) is a 4-aspartylphosphate.

Its function is as follows. Required for stress adaptation, morphogenesis and virulence. This is Stress response regulator protein 1 (SRR1) from Scheffersomyces stipitis (strain ATCC 58785 / CBS 6054 / NBRC 10063 / NRRL Y-11545) (Yeast).